A 428-amino-acid chain; its full sequence is 3-phosphoshikimate 1-carboxyvinyltransferase (428 aa).

Lys-23, Ser-24, and Arg-28 together coordinate 3-phosphoshikimate. Lys-23 provides a ligand contact to phosphoenolpyruvate. Phosphoenolpyruvate-binding residues include Gly-97 and Arg-125. 7 residues coordinate 3-phosphoshikimate: Ser-170, Ser-171, Gln-172, Ser-198, Asp-314, Asn-337, and Lys-341. Gln-172 serves as a coordination point for phosphoenolpyruvate. The active-site Proton acceptor is the Asp-314. Phosphoenolpyruvate contacts are provided by Arg-345, Arg-387, and Lys-412.

Belongs to the EPSP synthase family. In terms of assembly, monomer.

The protein resides in the cytoplasm. It catalyses the reaction 3-phosphoshikimate + phosphoenolpyruvate = 5-O-(1-carboxyvinyl)-3-phosphoshikimate + phosphate. It participates in metabolic intermediate biosynthesis; chorismate biosynthesis; chorismate from D-erythrose 4-phosphate and phosphoenolpyruvate: step 6/7. In terms of biological role, catalyzes the transfer of the enolpyruvyl moiety of phosphoenolpyruvate (PEP) to the 5-hydroxyl of shikimate-3-phosphate (S3P) to produce enolpyruvyl shikimate-3-phosphate and inorganic phosphate. This is 3-phosphoshikimate 1-carboxyvinyltransferase from Edwardsiella ictaluri (strain 93-146).